A 118-amino-acid chain; its full sequence is NADH-ubiquinone oxidoreductase chain 3 (118 aa).

The next 3 membrane-spanning stretches (helical) occupy residues 7-27 (IFIY…LPFL), 62-82 (LVSI…PWAV), and 87-107 (IDLF…IGFL).

The protein belongs to the complex I subunit 3 family.

It localises to the mitochondrion membrane. It catalyses the reaction a ubiquinone + NADH + 5 H(+)(in) = a ubiquinol + NAD(+) + 4 H(+)(out). In terms of biological role, core subunit of the mitochondrial membrane respiratory chain NADH dehydrogenase (Complex I) that is believed to belong to the minimal assembly required for catalysis. Complex I functions in the transfer of electrons from NADH to the respiratory chain. The immediate electron acceptor for the enzyme is believed to be ubiquinone. This chain is NADH-ubiquinone oxidoreductase chain 3 (ND3), found in Allium cepa (Onion).